The primary structure comprises 422 residues: Tyrosine-protein kinase STYK1 (422 aa).

The chain crosses the membrane as a helical span at residues 26–46 (VIIVPTLLVTIFLILLGVILW). The 271-residue stretch at 114-384 (SEVLEQICSG…ELRLRLEAAI (271 aa)) folds into the Protein kinase domain. ATP is bound by residues 120–128 (ICSGSCGPI) and Lys147. Asp251 serves as the catalytic Proton acceptor.

This sequence belongs to the protein kinase superfamily. Tyr protein kinase family. As to expression, widely expressed. Highly expressed in brain, placenta and prostate. Expressed in tumor cells such as hepatoma cells L-02, cervix carcinoma cells HeLa, ovary cancer cells Ho8910 and chronic myelogenous leukemia cells K-562, but not in other tumor cells such as epidermoid carcinoma (A-431). Undetectable in most normal lung tissues, widely expressed in lung cancers.

It localises to the membrane. It catalyses the reaction L-tyrosyl-[protein] + ATP = O-phospho-L-tyrosyl-[protein] + ADP + H(+). Its function is as follows. Probable tyrosine protein-kinase, which has strong transforming capabilities on a variety of cell lines. When overexpressed, it can also induce tumor cell invasion as well as metastasis in distant organs. May act by activating both MAP kinase and phosphatidylinositol 3'-kinases (PI3K) pathways. This Homo sapiens (Human) protein is Tyrosine-protein kinase STYK1 (STYK1).